Here is a 285-residue protein sequence, read N- to C-terminus: MTTKDTWFTEHFQATGSAIGFRVTGKLDEVQSPFQKIEIYNSTDWGKLMVIDGALMLTSRDNFIYHEMISHPALFTHTAPKCVVIIGGGDCGTLREVLKHPDIEQVTQCDIDEQVTRMAEKHFPELCTSNNDPRATLLFSDGVAYMADCPTNSVDVIIVDSTDPIGPAKGLFNRTFYESCFRALKNDGLLIQQSESPLALLELIKEMRHEMSKAGFKAFKTLPFPQPCYPTGWWSVTLSSKQPNANFAFRQTDAQTKPFDTLYYNAHLHHGVLAPPPFIAHALGE.

Positions 5–241 (DTWFTEHFQA…GWWSVTLSSK (237 aa)) constitute a PABS domain. Gln35 provides a ligand contact to S-methyl-5'-thioadenosine. Positions 66 and 90 each coordinate spermidine. S-methyl-5'-thioadenosine contacts are provided by residues Asp110 and 141-142 (DG). The Proton acceptor role is filled by Asp160. 160-163 (DSTD) contributes to the spermidine binding site. Pro167 is a binding site for S-methyl-5'-thioadenosine.

This sequence belongs to the spermidine/spermine synthase family. As to quaternary structure, homodimer or homotetramer.

It is found in the cytoplasm. It catalyses the reaction S-adenosyl 3-(methylsulfanyl)propylamine + putrescine = S-methyl-5'-thioadenosine + spermidine + H(+). The protein operates within amine and polyamine biosynthesis; spermidine biosynthesis; spermidine from putrescine: step 1/1. Its function is as follows. Catalyzes the irreversible transfer of a propylamine group from the amino donor S-adenosylmethioninamine (decarboxy-AdoMet) to putrescine (1,4-diaminobutane) to yield spermidine. The sequence is that of Polyamine aminopropyltransferase from Xylella fastidiosa (strain M12).